Here is a 66-residue protein sequence, read N- to C-terminus: Gas vesicle protein A (66 aa).

The protein belongs to the gas vesicle GvpA family. In terms of assembly, the gas vesicle shell is 2 nm thick and consists of a single layer of this protein. It forms helical ribs nearly perpendicular to the long axis of the vesicle.

It is found in the gas vesicle shell. Its function is as follows. Gas vesicles are hollow, gas filled proteinaceous nanostructures found in some microorganisms. During planktonic growth they allow positioning of the organism at a favorable depth for light or nutrient acquisition. GvpA forms the protein shell. The protein is Gas vesicle protein A of Thiocapsa pendens (Amoebobacter pendens).